A 434-amino-acid polypeptide reads, in one-letter code: Glycerol-3-phosphate acyltransferase 3 (434 aa).

A helical transmembrane segment spans residues 14-34 (WLTLVLGFILLPSVFGVSLGI). Phosphoserine occurs at positions 68 and 77. Helical transmembrane passes span 137 to 157 (ISLR…CVLL) and 161 to 181 (VTLA…VGQL). Residues 229–234 (HTSPID) carry the HXXXXD motif motif.

The protein belongs to the 1-acyl-sn-glycerol-3-phosphate acyltransferase family. As to expression, widely expressed. Expressed in liver, kidney, testis, brain, heart, skeletal muscle, thyroid, prostate, thymus and placenta. Also expressed lung and adipose tissue.

It is found in the endoplasmic reticulum membrane. The catalysed reaction is sn-glycerol 3-phosphate + an acyl-CoA = a 1-acyl-sn-glycero-3-phosphate + CoA. It carries out the reaction a 1-acyl-sn-glycero-3-phosphate + an acyl-CoA = a 1,2-diacyl-sn-glycero-3-phosphate + CoA. The enzyme catalyses dodecanoyl-CoA + sn-glycerol 3-phosphate = 1-dodecanoyl-sn-glycerol 3-phosphate + CoA. It catalyses the reaction sn-glycerol 3-phosphate + hexadecanoyl-CoA = 1-hexadecanoyl-sn-glycero-3-phosphate + CoA. The catalysed reaction is sn-glycerol 3-phosphate + (9Z)-octadecenoyl-CoA = 1-(9Z-octadecenoyl)-sn-glycero-3-phosphate + CoA. It carries out the reaction (9Z,12Z)-octadecadienoyl-CoA + sn-glycerol 3-phosphate = 1-(9Z,12Z)-octadecadienoyl-sn-glycero-3-phosphate + CoA. The enzyme catalyses 1-tetradecanoyl-sn-glycerol 3-phosphate + (9Z)-octadecenoyl-CoA = 1-tetradecanoyl-2-(9Z)-octadecenoyl-sn-glycero-3-phosphate + CoA. It catalyses the reaction 1-hexadecanoyl-sn-glycero-3-phosphate + (9Z)-octadecenoyl-CoA = 1-hexadecanoyl-2-(9Z-octadecenoyl)-sn-glycero-3-phosphate + CoA. The catalysed reaction is 1-(9Z-octadecenoyl)-sn-glycero-3-phosphate + (9Z)-octadecenoyl-CoA = 1,2-di-(9Z-octadecenoyl)-sn-glycero-3-phosphate + CoA. It carries out the reaction 1-(6Z,9Z,12Z-octadecatrienoyl)-sn-glycero-3-phosphate + (9Z)-octadecenoyl-CoA = (6Z,9Z,12Z)-octadecatrienoyl-2-(9Z)-octadecenoyl-sn-glycero-3-phosphate + CoA. The enzyme catalyses 1-(9Z,12Z,15Z)-octadecatrienoyl-sn-glycero-3-phosphate + (9Z)-octadecenoyl-CoA = 1-(9Z,12Z,15Z)-octadecatrienoyl-2-(9Z)-octadecenoyl-sn-glycero-3-phosphate + CoA. It catalyses the reaction 1-(9Z-octadecenoyl)-sn-glycero-3-phosphate + tetradecanoyl-CoA = 1-(9Z)-octadecenoyl-2-tetradecanoyl-sn-glycero-3-phosphate + CoA. The catalysed reaction is 1-(9Z-octadecenoyl)-sn-glycero-3-phosphate + hexadecanoyl-CoA = 1-(9Z)-octadecenoyl-2-hexadecanoyl-sn-glycero-3-phosphate + CoA. It carries out the reaction 1-(9Z-octadecenoyl)-sn-glycero-3-phosphate + octadecanoyl-CoA = 1-(9Z-octadecenoyl)-2-octadecanoyl-sn-glycero-3-phosphate + CoA. The enzyme catalyses 1-(9Z-octadecenoyl)-sn-glycero-3-phosphate + (9Z,12Z)-octadecadienoyl-CoA = 1-(9Z)-octadecenoyl-2-(9Z,12Z)-octadecadienoyl-sn-glycero-3-phosphate + CoA. It catalyses the reaction 1-(5Z,8Z,11Z,14Z-eicosatetraenoyl)-sn-glycero-3-phosphate + (9Z)-octadecenoyl-CoA = 1-(5Z,8Z,11Z,14Z)-eicosatetraenoyl-2-(9Z)-octadecenoyl-sn-glycero-3-phosphate + CoA. Its pathway is glycerolipid metabolism; triacylglycerol biosynthesis. The protein operates within phospholipid metabolism; CDP-diacylglycerol biosynthesis; CDP-diacylglycerol from sn-glycerol 3-phosphate: step 1/3. Its activity is regulated as follows. Inhibited by N-ethylmaleimide (NEM). Its function is as follows. Converts glycerol-3-phosphate to 1-acyl-sn-glycerol-3-phosphate (lysophosphatidic acid or LPA) by incorporating an acyl moiety at the sn-1 position of the glycerol backbone. Also converts LPA into 1,2-diacyl-sn-glycerol-3-phosphate (phosphatidic acid or PA) by incorporating an acyl moiety at the sn-2 position of the glycerol backbone. Protects cells against lipotoxicity. This Homo sapiens (Human) protein is Glycerol-3-phosphate acyltransferase 3.